Reading from the N-terminus, the 176-residue chain is Adenine phosphoribosyltransferase (176 aa).

Belongs to the purine/pyrimidine phosphoribosyltransferase family. In terms of assembly, homodimer.

It localises to the cytoplasm. The catalysed reaction is AMP + diphosphate = 5-phospho-alpha-D-ribose 1-diphosphate + adenine. Its pathway is purine metabolism; AMP biosynthesis via salvage pathway; AMP from adenine: step 1/1. In terms of biological role, catalyzes a salvage reaction resulting in the formation of AMP, that is energically less costly than de novo synthesis. This chain is Adenine phosphoribosyltransferase, found in Borreliella afzelii (strain PKo) (Borrelia afzelii).